A 103-amino-acid chain; its full sequence is MERIRLRLKAYDHRVLDRSVASIVEAVKRTGSEIRGPVPLPTKKKRYTVLRSPHINKDSREQFEIRVHHRIIDIMSATPDTVDSLMKLDLAPEVDVEVMSMSK.

It belongs to the universal ribosomal protein uS10 family. As to quaternary structure, part of the 30S ribosomal subunit.

Involved in the binding of tRNA to the ribosomes. This Helicobacter hepaticus (strain ATCC 51449 / 3B1) protein is Small ribosomal subunit protein uS10.